A 104-amino-acid polypeptide reads, in one-letter code: Putative thioredoxin-4 (104 aa).

The Thioredoxin domain occupies 2–104 (SKVTNVSINT…QLRKILDSMK (103 aa)). Residues C31 and C34 each act as nucleophile in the active site. C31 and C34 form a disulfide bridge.

It belongs to the thioredoxin family.

Participates in various redox reactions through the reversible oxidation of its active center dithiol to a disulfide and catalyzes dithiol-disulfide exchange reactions. This is Putative thioredoxin-4 (trxD) from Dictyostelium discoideum (Social amoeba).